The following is a 679-amino-acid chain: Acetyl-coenzyme A synthetase 2 (679 aa).

A disordered region spans residues 1-32 (MTSSPTHQVVHEANNIKKQETPKEFFERQPRQ). A compositionally biased stretch (basic and acidic residues) spans 14–30 (NNIKKQETPKEFFERQP). CoA contacts are provided by residues 207–210 (RGGK) and Thr326. ATP-binding positions include 402 to 404 (GEP), 426 to 431 (DTYWQT), Asp517, and Arg532. Residue Ser540 participates in CoA binding. Arg543 contributes to the ATP binding site. Position 611 (Arg611) interacts with CoA.

This sequence belongs to the ATP-dependent AMP-binding enzyme family.

The catalysed reaction is acetate + ATP + CoA = acetyl-CoA + AMP + diphosphate. The polypeptide is Acetyl-coenzyme A synthetase 2 (ACS2) (Debaryomyces hansenii (strain ATCC 36239 / CBS 767 / BCRC 21394 / JCM 1990 / NBRC 0083 / IGC 2968) (Yeast)).